A 180-amino-acid chain; its full sequence is Chromosome-anchoring protein RacA (180 aa).

The segment at residues 5–25 (TPFIAKKLGVSPKAVVRIAQQ) is a DNA-binding region (H-T-H motif). The stretch at 90-150 (HDFEQLAAQL…KLEAGLKKEE (61 aa)) forms a coiled coil.

The protein belongs to the RacA family.

It is found in the cytoplasm. Functionally, required for the formation of axial filaments and for anchoring the origin regions at the cell poles in sporulating cells, thus ensuring proper chromosome segregation in the prespore. Binds in a dispersed manner throughout the chromosome but preferentially to sites clustered in the origin portion of the chromosome, causing condensation of the chromosome and its remodeling into an elongated, anchored structure. The polypeptide is Chromosome-anchoring protein RacA (Bacillus anthracis (strain A0248)).